Reading from the N-terminus, the 259-residue chain is Bisphosphoglycerate mutase (259 aa).

Position 2 is an N-acetylserine (serine 2). Substrate-binding positions include 10-17 (RHGEGAWN), 23-24 (CS), arginine 62, 89-92 (ERHY), arginine 100, and 116-117 (RR). Catalysis depends on histidine 11, which acts as the Tele-phosphohistidine intermediate. Glutamate 89 functions as the Proton donor/acceptor in the catalytic mechanism. At threonine 122 the chain carries Phosphothreonine. 189 to 190 (GN) is a binding site for substrate.

It belongs to the phosphoglycerate mutase family. BPG-dependent PGAM subfamily. As to quaternary structure, homodimer.

It carries out the reaction (2R)-3-phospho-glyceroyl phosphate = (2R)-2,3-bisphosphoglycerate + H(+). The catalysed reaction is (2R)-2-phosphoglycerate = (2R)-3-phosphoglycerate. Its activity is regulated as follows. At alkaline pH BPGM favors the synthase reaction; however, at lower pH the phosphatase reaction is dominant. Inhibited by citrate. Functionally, plays a major role in regulating hemoglobin oxygen affinity by controlling the levels of its allosteric effector 2,3-bisphosphoglycerate (2,3-BPG). Also exhibits mutase (EC 5.4.2.11) activity. This chain is Bisphosphoglycerate mutase (BPGM), found in Bos taurus (Bovine).